We begin with the raw amino-acid sequence, 167 residues long: uncharacterized protein (167 aa).

Belongs to the A.longa ORF167/ORF288 family.

It is found in the plastid. This is an uncharacterized protein from Euglena longa (Euglenophycean alga).